The following is a 328-amino-acid chain: MEYHELNPLIRGRELELISKDTFEQMIQTDSIDSLGEILQSTIYQPYIYDGFDKDFEANLSQERSKLFQWLKESAPEPEIVWIYTMRYTFHNLKVLTKAEITGQNLDHLYIHDGFYSLEVLKDAIHTQVSVELPDSLMDYIREVHEYCEESTILQGIDVIYDRCFLTEQRRLGEQLGYPELLEEIIAFIDLTNITTTARGILQHRSAGFMTTVISSSGSIPKDTLLSFVRGEMASFTQFLLTTDYSELLKQVIHEEQIDLVSLEQLKDDYLSSFYQVAQTQAFGPLPLLAFLNAKEVESKNLRLLIIGKRNHFSLEQLKERMRQVYDL.

This sequence belongs to the V-ATPase V0D/AC39 subunit family.

Involved in ATP-driven sodium extrusion. The sequence is that of V-type sodium ATPase subunit C (ntpC) from Enterococcus hirae (strain ATCC 9790 / DSM 20160 / JCM 8729 / LMG 6399 / NBRC 3181 / NCIMB 6459 / NCDO 1258 / NCTC 12367 / WDCM 00089 / R).